A 499-amino-acid polypeptide reads, in one-letter code: Probable cytosol aminopeptidase (499 aa).

Mn(2+) contacts are provided by Lys269 and Asp274. Lys281 is an active-site residue. Positions 292, 351, and 353 each coordinate Mn(2+). Arg355 is a catalytic residue.

The protein belongs to the peptidase M17 family. The cofactor is Mn(2+).

It localises to the cytoplasm. It catalyses the reaction Release of an N-terminal amino acid, Xaa-|-Yaa-, in which Xaa is preferably Leu, but may be other amino acids including Pro although not Arg or Lys, and Yaa may be Pro. Amino acid amides and methyl esters are also readily hydrolyzed, but rates on arylamides are exceedingly low.. The catalysed reaction is Release of an N-terminal amino acid, preferentially leucine, but not glutamic or aspartic acids.. Functionally, presumably involved in the processing and regular turnover of intracellular proteins. Catalyzes the removal of unsubstituted N-terminal amino acids from various peptides. The sequence is that of Probable cytosol aminopeptidase from Haemophilus ducreyi (strain 35000HP / ATCC 700724).